A 1244-amino-acid polypeptide reads, in one-letter code: Alpha-protein kinase 1 (1244 aa).

ADP-D-glycero-beta-D-manno-heptose is bound by residues F61, Q67, R116, R150–R153, D231, K233, S236–T237, and F295. Disordered stretches follow at residues L650–S675, V701–S737, V757–A798, and N824–A848. The segment covering E652 to S675 has biased composition (polar residues). The segment covering S713–S726 has biased composition (low complexity). Over residues V757–E771 the composition is skewed to basic and acidic residues. The span at P787–A798 shows a compositional bias: acidic residues. The Alpha-type protein kinase domain occupies K1017–P1237.

The protein belongs to the protein kinase superfamily. Alpha-type protein kinase family. ALPK subfamily. As to expression, highly expressed in liver. Expressed in the optic nerve and retinal pigmented epithelium. Lower expression is observed in the macula and extramacular retina.

The protein localises to the cytoplasm. The protein resides in the cytosol. Its subcellular location is the cytoskeleton. It localises to the spindle pole. It is found in the microtubule organizing center. The protein localises to the centrosome. The protein resides in the cell projection. Its subcellular location is the cilium. It catalyses the reaction L-seryl-[protein] + ATP = O-phospho-L-seryl-[protein] + ADP + H(+). It carries out the reaction L-threonyl-[protein] + ATP = O-phospho-L-threonyl-[protein] + ADP + H(+). Serine/threonine-protein kinase activity is stimulated upon ADP-D-glycero-beta-D-manno-heptose (ADP-Heptose)-binding. In terms of biological role, serine/threonine-protein kinase that detects bacterial pathogen-associated molecular pattern metabolites (PAMPs) and initiates an innate immune response, a critical step for pathogen elimination and engagement of adaptive immunity. Specifically recognizes and binds ADP-D-glycero-beta-D-manno-heptose (ADP-Heptose), a potent PAMP present in all Gram-negative and some Gram-positive bacteria. ADP-Heptose-binding stimulates its kinase activity to phosphorylate and activate TIFA, triggering pro-inflammatory NF-kappa-B signaling. May be involved in monosodium urate monohydrate (MSU)-induced inflammation by mediating phosphorylation of unconventional myosin MYO9A. May also play a role in apical protein transport by mediating phosphorylation of unconventional myosin MYO1A. May play a role in ciliogenesis. This chain is Alpha-protein kinase 1, found in Homo sapiens (Human).